Consider the following 135-residue polypeptide: Translation initiation factor 2 subunit beta (135 aa).

Belongs to the eIF-2-beta/eIF-5 family. In terms of assembly, heterotrimer composed of an alpha, a beta and a gamma chain.

In terms of biological role, eIF-2 functions in the early steps of protein synthesis by forming a ternary complex with GTP and initiator tRNA. This is Translation initiation factor 2 subunit beta (eif2b) from Methanothermobacter thermautotrophicus (strain ATCC 29096 / DSM 1053 / JCM 10044 / NBRC 100330 / Delta H) (Methanobacterium thermoautotrophicum).